The primary structure comprises 689 residues: Glycine--tRNA ligase beta subunit (689 aa).

Belongs to the class-II aminoacyl-tRNA synthetase family. As to quaternary structure, tetramer of two alpha and two beta subunits.

Its subcellular location is the cytoplasm. The enzyme catalyses tRNA(Gly) + glycine + ATP = glycyl-tRNA(Gly) + AMP + diphosphate. This is Glycine--tRNA ligase beta subunit from Pseudoalteromonas translucida (strain TAC 125).